A 345-amino-acid polypeptide reads, in one-letter code: 3-dehydroquinate synthase (345 aa).

This sequence belongs to the archaeal-type DHQ synthase family.

It carries out the reaction 2-amino-2,3,7-trideoxy-D-lyxo-hept-6-ulosonate + NAD(+) + H2O = 3-dehydroquinate + NH4(+) + NADH + H(+). Its function is as follows. Catalyzes the oxidative deamination and cyclization of 2-amino-3,7-dideoxy-D-threo-hept-6-ulosonic acid (ADH) to yield 3-dehydroquinate (DHQ), which is fed into the canonical shikimic pathway of aromatic amino acid biosynthesis. The polypeptide is 3-dehydroquinate synthase (Methanocorpusculum labreanum (strain ATCC 43576 / DSM 4855 / Z)).